The primary structure comprises 288 residues: Transposase InsF for insertion sequence IS3fB (288 aa).

An Integrase catalytic domain is found at 124-287 (YASGPNQKWA…SPEQFENQNL (164 aa)).

The protein belongs to the transposase IS3/IS150/IS904 family.

Functionally, involved in the transposition of the insertion sequence IS3. This chain is Transposase InsF for insertion sequence IS3fB (insF7), found in Escherichia coli (strain K12).